We begin with the raw amino-acid sequence, 156 residues long: MAMKMKGIYKSFKSIMFVGKERDLEIGHPTEVKHVAHIGWGSSGSDPGWMSDFKAGAEFLSPRTSSFSHTRHSDSFFTTSDSTEFDQDQLNISDRIRDVPPIPVGLSKIHTKSKNRRKKPSSTSSPRSRPSPKSSRSMGLSKSSHKSMVSRLNSNA.

The CRIB domain maps to 26–39; sequence IGHPTEVKHVAHIG. Residues 87 to 156 are disordered; sequence QDQLNISDRI…SMVSRLNSNA (70 aa). A compositionally biased stretch (basic residues) spans 109–120; it reads IHTKSKNRRKKP. Positions 121–142 are enriched in low complexity; it reads SSTSSPRSRPSPKSSRSMGLSK.

Its function is as follows. Functions as a downstream effector of Rho-related GTP binding proteins of the 'Rho of Plants' (ROPs) family. Participates in the propagation of ROP GTPase signals in specific cellular responses. This Arabidopsis thaliana (Mouse-ear cress) protein is CRIB domain-containing protein RIC11 (RIC11).